The following is a 163-amino-acid chain: Protein VASCULATURE COMPLEXITY AND CONNECTIVITY (163 aa).

A signal peptide spans 1–27 (MTKIGGILVCLVIVGLDVAAAILGIQA). Helical transmembrane passes span 54–74 (LGLG…LVGG), 95–115 (MACL…IVIG), and 133–153 (FLSI…AYYV).

Belongs to the DESIGUAL family. In terms of assembly, interacts with OPS. As to expression, expressed in vascular cells, mostly in hypocotyls, and, to a lower extent, in seedlings, roots, flowers, siliques, developing leaves and inflorescences, but barely in mature leaves and seeds. High levels in leaf primordia.

It is found in the endoplasmic reticulum membrane. Required, together with OPS, for embryo provasculature development and cotyledon vascular complexity and connectivity. Necessary, partially redundantly with DEAL2 and DEAL3, to ensure bilateral symmetry development and early leaf margin patterning, probably via the regulation of auxin and CUC2 distribution. Regulates cell proliferation but not cell expansion. In Arabidopsis thaliana (Mouse-ear cress), this protein is Protein VASCULATURE COMPLEXITY AND CONNECTIVITY.